Consider the following 47-residue polypeptide: Large ribosomal subunit protein eL40 (47 aa).

The protein belongs to the eukaryotic ribosomal protein eL40 family.

The chain is Large ribosomal subunit protein eL40 from Methanococcus aeolicus (strain ATCC BAA-1280 / DSM 17508 / OCM 812 / Nankai-3).